A 42-amino-acid chain; its full sequence is Crotamine Ile-19 (42 aa).

3 disulfides stabilise this stretch: C4–C36, C11–C30, and C18–C37.

This sequence belongs to the crotamine-myotoxin family. As to quaternary structure, monomer. As to expression, expressed by the venom gland.

It is found in the secreted. Functionally, cationic peptide that possesses multiple functions. It acts as a cell-penetrating peptide (CPP), and as a potent voltage-gated potassium channel (Kv) inhibitor, it induces severe muscle necrosis by a non-enzymatic mechanism and exhibits antimicrobial activities. It also elicits a short-lasting hyperextension of the hind limb. It does not cause observable tissue damage (whereas the whole venom causes severe myonecrosis accompanied by edema and hemorrhage). The polypeptide is Crotamine Ile-19 (Crotalus durissus ruruima (South American rattlesnake)).